The following is a 366-amino-acid chain: Chorismate synthase (366 aa).

2 residues coordinate NADP(+): Arg-48 and Arg-54. FMN contacts are provided by residues Arg-125–Ser-127, Asn-238–Ala-239, Gly-278, Lys-293–Ser-297, and Arg-319.

Belongs to the chorismate synthase family. As to quaternary structure, homotetramer. FMNH2 serves as cofactor.

It catalyses the reaction 5-O-(1-carboxyvinyl)-3-phosphoshikimate = chorismate + phosphate. Its pathway is metabolic intermediate biosynthesis; chorismate biosynthesis; chorismate from D-erythrose 4-phosphate and phosphoenolpyruvate: step 7/7. In terms of biological role, catalyzes the anti-1,4-elimination of the C-3 phosphate and the C-6 proR hydrogen from 5-enolpyruvylshikimate-3-phosphate (EPSP) to yield chorismate, which is the branch point compound that serves as the starting substrate for the three terminal pathways of aromatic amino acid biosynthesis. This reaction introduces a second double bond into the aromatic ring system. This chain is Chorismate synthase, found in Herminiimonas arsenicoxydans.